The following is an 88-amino-acid chain: UPF0335 protein Mnod_5968 (88 aa).

Belongs to the UPF0335 family.

The polypeptide is UPF0335 protein Mnod_5968 (Methylobacterium nodulans (strain LMG 21967 / CNCM I-2342 / ORS 2060)).